We begin with the raw amino-acid sequence, 99 residues long: A-type ATP synthase subunit F (99 aa).

This sequence belongs to the V-ATPase F subunit family. As to quaternary structure, has multiple subunits with at least A(3), B(3), C, D, E, F, H, I and proteolipid K(x).

It is found in the cell membrane. In terms of biological role, component of the A-type ATP synthase that produces ATP from ADP in the presence of a proton gradient across the membrane. This is A-type ATP synthase subunit F from Methanococcus maripaludis (strain C7 / ATCC BAA-1331).